Consider the following 83-residue polypeptide: uncharacterized protein (83 aa).

Residues 55 to 75 (FGIGAAGVLGSFVTGLLIGWV) form a helical membrane-spanning segment.

It is found in the host membrane. Functionally, may play a role in phage assembly. This is an uncharacterized protein from Pseudomonas phage Pf1 (Bacteriophage Pf1).